The following is a 127-amino-acid chain: Putative truncated L-serine dehydratase YIL168W (127 aa).

At Lys39 the chain carries N6-(pyridoxal phosphate)lysine.

Belongs to the serine/threonine dehydratase family. The cofactor is pyridoxal 5'-phosphate.

The protein localises to the cytoplasm. The catalysed reaction is L-serine = pyruvate + NH4(+). The protein operates within carbohydrate biosynthesis; gluconeogenesis. This chain is Putative truncated L-serine dehydratase YIL168W, found in Saccharomyces cerevisiae (strain ATCC 204508 / S288c) (Baker's yeast).